Reading from the N-terminus, the 176-residue chain is Acireductone dioxygenase (176 aa).

The Fe(2+) site is built by His-91, His-93, Glu-97, and His-136. 4 residues coordinate Ni(2+): His-91, His-93, Glu-97, and His-136.

This sequence belongs to the acireductone dioxygenase (ARD) family. Monomer. Fe(2+) is required as a cofactor. Requires Ni(2+) as cofactor.

The enzyme catalyses 1,2-dihydroxy-5-(methylsulfanyl)pent-1-en-3-one + O2 = 3-(methylsulfanyl)propanoate + CO + formate + 2 H(+). The catalysed reaction is 1,2-dihydroxy-5-(methylsulfanyl)pent-1-en-3-one + O2 = 4-methylsulfanyl-2-oxobutanoate + formate + 2 H(+). The protein operates within amino-acid biosynthesis; L-methionine biosynthesis via salvage pathway; L-methionine from S-methyl-5-thio-alpha-D-ribose 1-phosphate: step 5/6. In terms of biological role, catalyzes 2 different reactions between oxygen and the acireductone 1,2-dihydroxy-3-keto-5-methylthiopentene (DHK-MTPene) depending upon the metal bound in the active site. Fe-containing acireductone dioxygenase (Fe-ARD) produces formate and 2-keto-4-methylthiobutyrate (KMTB), the alpha-ketoacid precursor of methionine in the methionine recycle pathway. Ni-containing acireductone dioxygenase (Ni-ARD) produces methylthiopropionate, carbon monoxide and formate, and does not lie on the methionine recycle pathway. The polypeptide is Acireductone dioxygenase (Picosynechococcus sp. (strain ATCC 27264 / PCC 7002 / PR-6) (Agmenellum quadruplicatum)).